Reading from the N-terminus, the 339-residue chain is Ketol-acid reductoisomerase (NADP(+)) (339 aa).

In terms of domain architecture, KARI N-terminal Rossmann spans 1–182 (MRVYYDRDAD…GGGRSGVIET (182 aa)). NADP(+) is bound by residues 24–27 (YGSQ), R48, S51, T53, and 83–86 (DELQ). Residue H108 is part of the active site. Residue G134 coordinates NADP(+). The KARI C-terminal knotted domain occupies 183–328 (TFKEECETDL…GKLRAMMPWI (146 aa)). Residues D191, E195, E227, and E231 each contribute to the Mg(2+) site. A substrate-binding site is contributed by S252.

This sequence belongs to the ketol-acid reductoisomerase family. Mg(2+) serves as cofactor.

The catalysed reaction is (2R)-2,3-dihydroxy-3-methylbutanoate + NADP(+) = (2S)-2-acetolactate + NADPH + H(+). It carries out the reaction (2R,3R)-2,3-dihydroxy-3-methylpentanoate + NADP(+) = (S)-2-ethyl-2-hydroxy-3-oxobutanoate + NADPH + H(+). It participates in amino-acid biosynthesis; L-isoleucine biosynthesis; L-isoleucine from 2-oxobutanoate: step 2/4. Its pathway is amino-acid biosynthesis; L-valine biosynthesis; L-valine from pyruvate: step 2/4. In terms of biological role, involved in the biosynthesis of branched-chain amino acids (BCAA). Catalyzes an alkyl-migration followed by a ketol-acid reduction of (S)-2-acetolactate (S2AL) to yield (R)-2,3-dihydroxy-isovalerate. In the isomerase reaction, S2AL is rearranged via a Mg-dependent methyl migration to produce 3-hydroxy-3-methyl-2-ketobutyrate (HMKB). In the reductase reaction, this 2-ketoacid undergoes a metal-dependent reduction by NADPH to yield (R)-2,3-dihydroxy-isovalerate. The polypeptide is Ketol-acid reductoisomerase (NADP(+)) (Brucella canis (strain ATCC 23365 / NCTC 10854 / RM-666)).